Consider the following 236-residue polypeptide: uncharacterized protein (236 aa).

The segment covering 1–17 (MSVSSLLQPNTYNINSK) has biased composition (polar residues). Positions 1 to 94 (MSVSSLLQPN…GVKGTTGGTI (94 aa)) are disordered. A compositionally biased stretch (low complexity) spans 18 to 35 (SQSLSNTPSNPTSQTNTL). A Collagen-like domain is found at 58-91 (GPSGPKGDKGDPGSKGETGSQGIKGDPGVKGTTG).

It belongs to the sputnik virus V6 family.

This is an uncharacterized protein from Sputnik virophage.